We begin with the raw amino-acid sequence, 236 residues long: Diaminopimelate epimerase (236 aa).

Positions 8 and 55 each coordinate substrate. Cysteine 64 serves as the catalytic Proton donor. Substrate-binding positions include 65-66 (GN), asparagine 159, and 176-177 (ER). Residue cysteine 186 is the Proton acceptor of the active site. 187–188 (GT) is a substrate binding site.

It belongs to the diaminopimelate epimerase family. In terms of assembly, probably forms homotrimers.

The protein localises to the cytoplasm. The enzyme catalyses (2S,6S)-2,6-diaminopimelate = meso-2,6-diaminopimelate. Its pathway is amino-acid biosynthesis; L-lysine biosynthesis via DAP pathway; DL-2,6-diaminopimelate from LL-2,6-diaminopimelate: step 1/1. Catalyzes the stereoinversion of LL-2,6-diaminopimelate (L,L-DAP) to meso-diaminopimelate (meso-DAP), a precursor of L-lysine and an essential component of the bacterial peptidoglycan. Also catalyzes the racemization of certain amino acids, including Lys, with low efficiency. The protein is Diaminopimelate epimerase of Thermotoga maritima (strain ATCC 43589 / DSM 3109 / JCM 10099 / NBRC 100826 / MSB8).